Consider the following 360-residue polypeptide: UDP-N-acetylglucosamine--N-acetylmuramyl-(pentapeptide) pyrophosphoryl-undecaprenol N-acetylglucosamine transferase (360 aa).

Residues 17–19 (TAG), N130, R166, S200, I247, and Q291 contribute to the UDP-N-acetyl-alpha-D-glucosamine site.

It belongs to the glycosyltransferase 28 family. MurG subfamily.

The protein resides in the cell membrane. The enzyme catalyses di-trans,octa-cis-undecaprenyl diphospho-N-acetyl-alpha-D-muramoyl-L-alanyl-D-glutamyl-meso-2,6-diaminopimeloyl-D-alanyl-D-alanine + UDP-N-acetyl-alpha-D-glucosamine = di-trans,octa-cis-undecaprenyl diphospho-[N-acetyl-alpha-D-glucosaminyl-(1-&gt;4)]-N-acetyl-alpha-D-muramoyl-L-alanyl-D-glutamyl-meso-2,6-diaminopimeloyl-D-alanyl-D-alanine + UDP + H(+). It participates in cell wall biogenesis; peptidoglycan biosynthesis. Its function is as follows. Cell wall formation. Catalyzes the transfer of a GlcNAc subunit on undecaprenyl-pyrophosphoryl-MurNAc-pentapeptide (lipid intermediate I) to form undecaprenyl-pyrophosphoryl-MurNAc-(pentapeptide)GlcNAc (lipid intermediate II). The polypeptide is UDP-N-acetylglucosamine--N-acetylmuramyl-(pentapeptide) pyrophosphoryl-undecaprenol N-acetylglucosamine transferase (Corynebacterium efficiens (strain DSM 44549 / YS-314 / AJ 12310 / JCM 11189 / NBRC 100395)).